The primary structure comprises 200 residues: MQLNVNGAQAIEVSERTFGGEFNETLVHQAVVAYMAGGRQGSKAQKTRSEVSGGGKKPWRQKGTGRARAGTIRSPIWRGGGTTFAAKPRSHEQKLNKKMYRAALRSILAELVRLDRLVVVADFAVDAPKTKGLVAKLDTLGLKDVLIVTDGVDENLYLAARNLAHVDVRDVQGSDPVSLIAYDKVLVTVSAVKKFEELLG.

The tract at residues 38 to 67 is disordered; it reads GRQGSKAQKTRSEVSGGGKKPWRQKGTGRA.

The protein belongs to the universal ribosomal protein uL4 family. In terms of assembly, part of the 50S ribosomal subunit.

One of the primary rRNA binding proteins, this protein initially binds near the 5'-end of the 23S rRNA. It is important during the early stages of 50S assembly. It makes multiple contacts with different domains of the 23S rRNA in the assembled 50S subunit and ribosome. Functionally, forms part of the polypeptide exit tunnel. The sequence is that of Large ribosomal subunit protein uL4 from Pseudomonas paraeruginosa (strain DSM 24068 / PA7) (Pseudomonas aeruginosa (strain PA7)).